The primary structure comprises 278 residues: Putative carbamate hydrolase RutD (278 aa).

This sequence belongs to the AB hydrolase superfamily. Hydrolase RutD family.

The catalysed reaction is carbamate + 2 H(+) = NH4(+) + CO2. Involved in pyrimidine catabolism. May facilitate the hydrolysis of carbamate, a reaction that can also occur spontaneously. The protein is Putative carbamate hydrolase RutD of Yersinia enterocolitica serotype O:8 / biotype 1B (strain NCTC 13174 / 8081).